The sequence spans 81 residues: GAMMA-ctenitoxin-Pn1a (81 aa).

The signal sequence occupies residues M1–A16. Residues S17 to R34 constitute a propeptide that is removed on maturation. 5 disulfides stabilise this stretch: C35-C49, C42-C55, C46-C81, C48-C65, and C57-C63.

This sequence belongs to the neurotoxin 03 (Tx2) family. 05 subfamily. Expressed by the venom gland.

The protein localises to the secreted. In terms of biological role, this insecticidal neurotoxin targets two types of channels/receptors. It reversibly inhibits the N-methyl-D-aspartate (NMDA)-subtype of ionotropic glutamate receptor (GRIN). It inhibits glutamate uptake from rat brain synaptosomes, and blocks GRIN in hippocampal slices. It also acts on sodium channels of both insects and mammals. On sodium channel insects, it strongly slows down channel inactivation (EC(50)=212.5 nM) and causes an increase (105%) in peak amplitude (at 1 uM) of B.germanica sodium channel (Nav), whereas it inhibits all mammalien sodium channels tested with the following order of potency: Nav1.3/SCN3A (IC(50)=1.5 uM) &gt; Nav1.6/SCN8A &gt; Nav1.5/SCN5A &gt; Nav1.4/SCN4A &gt;= Nav1.2/SCN2A. In vivo, it is highly toxic to house fly (Musca domestica), cockroach (Periplaneta americana), and cricket (Acheta domesticus). In different rat pain models (induced by PGE2, carrageenan or glutamate), it shows antinociceptive effect that may be related to an inhibitory activity on the glutamatergic system. In Phoneutria nigriventer (Brazilian armed spider), this protein is GAMMA-ctenitoxin-Pn1a.